Consider the following 121-residue polypeptide: UPF0295 protein OB0906 (121 aa).

Helical transmembrane passes span 14–34 (IRTF…GGIL) and 43–63 (VIFF…YVWI).

It belongs to the UPF0295 family.

It localises to the cell membrane. The chain is UPF0295 protein OB0906 from Oceanobacillus iheyensis (strain DSM 14371 / CIP 107618 / JCM 11309 / KCTC 3954 / HTE831).